The following is a 274-amino-acid chain: Shikimate dehydrogenase (NADP(+)) (274 aa).

Shikimate-binding positions include 20–22 (SKS) and threonine 68. Catalysis depends on lysine 72, which acts as the Proton acceptor. Aspartate 84 provides a ligand contact to NADP(+). Shikimate contacts are provided by asparagine 93 and aspartate 109. Residues 131–135 (GAGGA) and leucine 217 contribute to the NADP(+) site. Tyrosine 219 is a shikimate binding site. Glycine 240 contributes to the NADP(+) binding site.

Belongs to the shikimate dehydrogenase family. As to quaternary structure, homodimer.

It catalyses the reaction shikimate + NADP(+) = 3-dehydroshikimate + NADPH + H(+). It participates in metabolic intermediate biosynthesis; chorismate biosynthesis; chorismate from D-erythrose 4-phosphate and phosphoenolpyruvate: step 4/7. Its function is as follows. Involved in the biosynthesis of the chorismate, which leads to the biosynthesis of aromatic amino acids. Catalyzes the reversible NADPH linked reduction of 3-dehydroshikimate (DHSA) to yield shikimate (SA). The protein is Shikimate dehydrogenase (NADP(+)) of Sphingopyxis alaskensis (strain DSM 13593 / LMG 18877 / RB2256) (Sphingomonas alaskensis).